Reading from the N-terminus, the 416-residue chain is Dihydrolipoyllysine-residue succinyltransferase component of 2-oxoglutarate dehydrogenase complex (416 aa).

Residues 3-78 (IVDVKVPQLS…VADEIIAKID (76 aa)) enclose the Lipoyl-binding domain. Position 44 is an N6-lipoyllysine (Lys44). Positions 115-152 (VAMPSAAKLMAEAGLSAGQVAGTGKDGRITKGDALAAA) constitute a Peripheral subunit-binding (PSBD) domain. Active-site residues include His387 and Asp391.

Belongs to the 2-oxoacid dehydrogenase family. Forms a 24-polypeptide structural core with octahedral symmetry. Part of the 2-oxoglutarate dehydrogenase (OGDH) complex composed of E1 (2-oxoglutarate dehydrogenase), E2 (dihydrolipoamide succinyltransferase) and E3 (dihydrolipoamide dehydrogenase); the complex contains multiple copies of the three enzymatic components (E1, E2 and E3). (R)-lipoate is required as a cofactor.

The catalysed reaction is N(6)-[(R)-dihydrolipoyl]-L-lysyl-[protein] + succinyl-CoA = N(6)-[(R)-S(8)-succinyldihydrolipoyl]-L-lysyl-[protein] + CoA. Its pathway is amino-acid degradation; L-lysine degradation via saccharopine pathway; glutaryl-CoA from L-lysine: step 6/6. In terms of biological role, E2 component of the 2-oxoglutarate dehydrogenase (OGDH) complex which catalyzes the second step in the conversion of 2-oxoglutarate to succinyl-CoA and CO(2). This Cupriavidus necator (strain ATCC 17699 / DSM 428 / KCTC 22496 / NCIMB 10442 / H16 / Stanier 337) (Ralstonia eutropha) protein is Dihydrolipoyllysine-residue succinyltransferase component of 2-oxoglutarate dehydrogenase complex (sucB).